Here is a 443-residue protein sequence, read N- to C-terminus: ATP-dependent protease ATPase subunit HslU (443 aa).

ATP contacts are provided by residues Ile-20, 62–67 (GVGKTE), Asp-255, Glu-321, and Arg-393.

The protein belongs to the ClpX chaperone family. HslU subfamily. A double ring-shaped homohexamer of HslV is capped on each side by a ring-shaped HslU homohexamer. The assembly of the HslU/HslV complex is dependent on binding of ATP.

It localises to the cytoplasm. In terms of biological role, ATPase subunit of a proteasome-like degradation complex; this subunit has chaperone activity. The binding of ATP and its subsequent hydrolysis by HslU are essential for unfolding of protein substrates subsequently hydrolyzed by HslV. HslU recognizes the N-terminal part of its protein substrates and unfolds these before they are guided to HslV for hydrolysis. This Helicobacter pylori (strain P12) protein is ATP-dependent protease ATPase subunit HslU.